The primary structure comprises 334 residues: Phosphate acyltransferase (334 aa).

This sequence belongs to the PlsX family. As to quaternary structure, homodimer. Probably interacts with PlsY.

Its subcellular location is the cytoplasm. It carries out the reaction a fatty acyl-[ACP] + phosphate = an acyl phosphate + holo-[ACP]. It functions in the pathway lipid metabolism; phospholipid metabolism. Catalyzes the reversible formation of acyl-phosphate (acyl-PO(4)) from acyl-[acyl-carrier-protein] (acyl-ACP). This enzyme utilizes acyl-ACP as fatty acyl donor, but not acyl-CoA. The protein is Phosphate acyltransferase of Streptococcus thermophilus (strain ATCC BAA-491 / LMD-9).